The following is an 889-amino-acid chain: Alanine--tRNA ligase (889 aa).

H564, H568, C671, and H675 together coordinate Zn(2+).

It belongs to the class-II aminoacyl-tRNA synthetase family. It depends on Zn(2+) as a cofactor.

The protein resides in the cytoplasm. It carries out the reaction tRNA(Ala) + L-alanine + ATP = L-alanyl-tRNA(Ala) + AMP + diphosphate. Its function is as follows. Catalyzes the attachment of alanine to tRNA(Ala) in a two-step reaction: alanine is first activated by ATP to form Ala-AMP and then transferred to the acceptor end of tRNA(Ala). Also edits incorrectly charged Ser-tRNA(Ala) and Gly-tRNA(Ala) via its editing domain. The sequence is that of Alanine--tRNA ligase from Pelagibacter ubique (strain HTCC1062).